Consider the following 273-residue polypeptide: MSNLQDIVVKEMKVKPSVESKSETRHIIQFIKNYVQSHSFIKSLTLGISGGQDSTLAGKLCQLAVNELKEDGNDCEFIAVKLPYGEQKDAAEVEDALTYIQPDKIITVNIKPAVDQSIQSLKEAGVNLTDFQKGNEKARERMKVQFSIASKQKGIVVGTDHSAENVTGFYTKYGDGAADIAPLFGLNKRQGKQLLAYLAAPKHLYEKTPTADLEDDKPQLPDEEALGVSYDDIDDYLEGKSVSSESKEIIENHYIKNAHKRELAYTRYTWPKN.

47-54 is a binding site for ATP; that stretch reads GISGGQDS. Aspartate 53 contacts Mg(2+). Arginine 139 lines the deamido-NAD(+) pocket. ATP is bound at residue threonine 159. Glutamate 164 provides a ligand contact to Mg(2+). Residues lysine 172 and aspartate 179 each coordinate deamido-NAD(+). ATP-binding residues include lysine 188 and threonine 210. 259–260 lines the deamido-NAD(+) pocket; the sequence is HK.

This sequence belongs to the NAD synthetase family. As to quaternary structure, homodimer.

The enzyme catalyses deamido-NAD(+) + NH4(+) + ATP = AMP + diphosphate + NAD(+) + H(+). The protein operates within cofactor biosynthesis; NAD(+) biosynthesis; NAD(+) from deamido-NAD(+) (ammonia route): step 1/1. Catalyzes the ATP-dependent amidation of deamido-NAD to form NAD. Uses ammonia as a nitrogen source. This is NH(3)-dependent NAD(+) synthetase from Staphylococcus saprophyticus subsp. saprophyticus (strain ATCC 15305 / DSM 20229 / NCIMB 8711 / NCTC 7292 / S-41).